Here is a 465-residue protein sequence, read N- to C-terminus: Anthocyanidin 3-O-glucosyltransferase 2 (465 aa).

His22 acts as the Proton acceptor in catalysis. An anthocyanidin contacts are provided by His22 and Gln87. Asp122 (charge relay) is an active-site residue. Thr145 provides a ligand contact to UDP-alpha-D-glucose. His154 is a binding site for an anthocyanidin. The UDP-alpha-D-glucose site is built by Ala345, Gln347, His362, Trp365, Asn366, Ser367, and Glu370. Position 385 (Gly385) interacts with an anthocyanidin. Positions 386 and 387 each coordinate UDP-alpha-D-glucose.

This sequence belongs to the UDP-glycosyltransferase family. As to expression, highest expression detected in fruit, with very low levels detected in petal and leaf.

It catalyses the reaction an anthocyanidin + UDP-alpha-D-glucose + H(+) = an anthocyanidin 3-O-beta-D-glucoside + UDP. The catalysed reaction is pelargonidin + UDP-alpha-D-glucose = pelargonidin 3-O-beta-D-glucoside + UDP. The enzyme catalyses cyanidin + UDP-alpha-D-glucose = cyanidin 3-O-beta-D-glucoside + UDP + H(+). It participates in pigment biosynthesis; anthocyanin biosynthesis. In terms of biological role, in the presence of other necessary color factors, this glycosylation reaction allows the accumulation of anthocyanin pigments. Anthocyanidins are the preferred substrates, while flavonols are only a minor substrate in vitro. This Fragaria ananassa (Strawberry) protein is Anthocyanidin 3-O-glucosyltransferase 2.